The chain runs to 415 residues: Serine hydroxymethyltransferase (415 aa).

Residues L117 and 121-123 (GHL) contribute to the (6S)-5,6,7,8-tetrahydrofolate site. The residue at position 226 (K226) is an N6-(pyridoxal phosphate)lysine. (6S)-5,6,7,8-tetrahydrofolate is bound by residues E241 and 349–351 (SPF).

The protein belongs to the SHMT family. Homodimer. The cofactor is pyridoxal 5'-phosphate.

It localises to the cytoplasm. It carries out the reaction (6R)-5,10-methylene-5,6,7,8-tetrahydrofolate + glycine + H2O = (6S)-5,6,7,8-tetrahydrofolate + L-serine. It functions in the pathway one-carbon metabolism; tetrahydrofolate interconversion. It participates in amino-acid biosynthesis; glycine biosynthesis; glycine from L-serine: step 1/1. Its function is as follows. Catalyzes the reversible interconversion of serine and glycine with tetrahydrofolate (THF) serving as the one-carbon carrier. This reaction serves as the major source of one-carbon groups required for the biosynthesis of purines, thymidylate, methionine, and other important biomolecules. Also exhibits THF-independent aldolase activity toward beta-hydroxyamino acids, producing glycine and aldehydes, via a retro-aldol mechanism. The polypeptide is Serine hydroxymethyltransferase (Trichlorobacter lovleyi (strain ATCC BAA-1151 / DSM 17278 / SZ) (Geobacter lovleyi)).